Consider the following 435-residue polypeptide: Galactomannan galactosyltransferase 1 (435 aa).

Topologically, residues 1 to 20 (MAKFGSRNKSPKWISNGCCF) are cytoplasmic. A helical; Signal-anchor for type II membrane protein membrane pass occupies residues 21–41 (LLGAFTALLLLWGLCSFIIPI). Over 42–435 (PNTDPKLNSV…SPLPFGYPAA (394 aa)) the chain is Lumenal. 2 N-linked (GlcNAc...) asparagine glycosylation sites follow: asparagine 230 and asparagine 328. A coiled-coil region spans residues 321–354 (EIVKTYENISERYDEVERKVEGLRRRHAEKVSEK).

This sequence belongs to the glycosyltransferase 34 family.

The protein resides in the golgi apparatus membrane. Its function is as follows. Galactomannan galactosyltransferase (GMGT) involved in galactomannan biosynthesis in seed endosperm. GMGT specificity is an important factor regulating the distribution and amount of alpha-1,6-galactose (Gal) substitution of the beta-1,4-linked mannan backbone. This is Galactomannan galactosyltransferase 1 (GMGT1) from Cyamopsis tetragonoloba (Guar).